Here is a 317-residue protein sequence, read N- to C-terminus: Ribosomal protein L11 methyltransferase (317 aa).

S-adenosyl-L-methionine contacts are provided by threonine 158, glycine 179, aspartate 201, and asparagine 244.

It belongs to the methyltransferase superfamily. PrmA family.

The protein localises to the cytoplasm. It catalyses the reaction L-lysyl-[protein] + 3 S-adenosyl-L-methionine = N(6),N(6),N(6)-trimethyl-L-lysyl-[protein] + 3 S-adenosyl-L-homocysteine + 3 H(+). Functionally, methylates ribosomal protein L11. The polypeptide is Ribosomal protein L11 methyltransferase (Streptococcus pyogenes serotype M1).